The chain runs to 376 residues: Histidinol-phosphate aminotransferase (376 aa).

An N6-(pyridoxal phosphate)lysine modification is found at Lys-230.

It belongs to the class-II pyridoxal-phosphate-dependent aminotransferase family. Histidinol-phosphate aminotransferase subfamily. Homodimer. The cofactor is pyridoxal 5'-phosphate.

It catalyses the reaction L-histidinol phosphate + 2-oxoglutarate = 3-(imidazol-4-yl)-2-oxopropyl phosphate + L-glutamate. The protein operates within amino-acid biosynthesis; L-histidine biosynthesis; L-histidine from 5-phospho-alpha-D-ribose 1-diphosphate: step 7/9. The polypeptide is Histidinol-phosphate aminotransferase (Trichodesmium erythraeum (strain IMS101)).